A 345-amino-acid polypeptide reads, in one-letter code: L-threonine 3-dehydrogenase (345 aa).

Zn(2+) is bound at residue C42. Residues T44 and H47 each act as charge relay system in the active site. Zn(2+) contacts are provided by H67, E68, C97, C100, C103, and C111. NAD(+) contacts are provided by residues I179, D199, R204, 266 to 268 (LGI), and 290 to 291 (IY).

This sequence belongs to the zinc-containing alcohol dehydrogenase family. In terms of assembly, homotetramer. Zn(2+) is required as a cofactor.

It is found in the cytoplasm. It catalyses the reaction L-threonine + NAD(+) = (2S)-2-amino-3-oxobutanoate + NADH + H(+). The protein operates within amino-acid degradation; L-threonine degradation via oxydo-reductase pathway; glycine from L-threonine: step 1/2. Functionally, catalyzes the NAD(+)-dependent oxidation of L-threonine to 2-amino-3-ketobutyrate. The protein is L-threonine 3-dehydrogenase of Rhizobium etli (strain ATCC 51251 / DSM 11541 / JCM 21823 / NBRC 15573 / CFN 42).